Reading from the N-terminus, the 588-residue chain is Adenine deaminase (588 aa).

This sequence belongs to the metallo-dependent hydrolases superfamily. Adenine deaminase family. In terms of assembly, homodimer. Requires Mn(2+) as cofactor.

It catalyses the reaction adenine + H2O + H(+) = hypoxanthine + NH4(+). This is Adenine deaminase from Escherichia fergusonii (strain ATCC 35469 / DSM 13698 / CCUG 18766 / IAM 14443 / JCM 21226 / LMG 7866 / NBRC 102419 / NCTC 12128 / CDC 0568-73).